A 218-amino-acid polypeptide reads, in one-letter code: MRQKYYIEAAARGLVGSCPGQARYLLWAYSSTHEDNSTFQETCPHCFQLLVLDNSRVRLKPKAKLTPKIQKLLNREARNYTLSFKETKLLRKYRDSASVLLITCRTCNRTVRHHGKSRSFLSALRSSRAASAASKASPKTPKRAAAGSTNISQSVHGSKGRSPSSTVRTPTSGQSTPICSSRNGSKRKKHFSQLKALLSQSASDKNPTLDFRHFLSSL.

The residue at position 126 (Ser126) is a Phosphoserine. Over residues 130-146 the composition is skewed to low complexity; sequence ASAASKASPKTPKRAAA. The interval 130 to 192 is disordered; the sequence is ASAASKASPK…NGSKRKKHFS (63 aa). Thr140 carries the phosphothreonine modification. The segment covering 147 to 156 has biased composition (polar residues); the sequence is GSTNISQSVH. Residues 161–172 show a composition bias toward low complexity; the sequence is RSPSSTVRTPTS. Over residues 173 to 183 the composition is skewed to polar residues; the sequence is GQSTPICSSRN.

Belongs to the UPF0711 family.

The chain is UPF0711 protein C18orf21 homolog from Rattus norvegicus (Rat).